We begin with the raw amino-acid sequence, 356 residues long: 3'-5' exonuclease (356 aa).

Residues methionine 1–glutamate 120 are disordered. Basic and acidic residues-rich tracts occupy residues threonine 29–proline 56 and lysine 71–glutamate 85. A compositionally biased stretch (low complexity) spans leucine 99–serine 113. Serine 105 and serine 113 each carry phosphoserine. One can recognise a 3'-5' exonuclease domain in the interval threonine 155–glutamine 316. Mg(2+) contacts are provided by aspartate 165, glutamate 167, and aspartate 303.

This sequence belongs to the WRNexo family.

The protein resides in the nucleus. In terms of biological role, has exonuclease activity on both single-stranded and duplex templates bearing overhangs, but not blunt ended duplex DNA, and cleaves in a 3'-5' direction. Essential for the formation of DNA replication focal centers. Has an important role in maintaining genome stability. The polypeptide is 3'-5' exonuclease (Drosophila willistoni (Fruit fly)).